We begin with the raw amino-acid sequence, 418 residues long: UDP-N-acetylglucosamine 1-carboxyvinyltransferase (418 aa).

Phosphoenolpyruvate is bound at residue 23 to 24; the sequence is KN. Arginine 93 is a binding site for UDP-N-acetyl-alpha-D-glucosamine. The active-site Proton donor is the aspartate 117. UDP-N-acetyl-alpha-D-glucosamine-binding residues include aspartate 305 and valine 327.

Belongs to the EPSP synthase family. MurA subfamily.

The protein localises to the cytoplasm. It carries out the reaction phosphoenolpyruvate + UDP-N-acetyl-alpha-D-glucosamine = UDP-N-acetyl-3-O-(1-carboxyvinyl)-alpha-D-glucosamine + phosphate. The protein operates within cell wall biogenesis; peptidoglycan biosynthesis. Its function is as follows. Cell wall formation. Adds enolpyruvyl to UDP-N-acetylglucosamine. The polypeptide is UDP-N-acetylglucosamine 1-carboxyvinyltransferase (Mycobacterium leprae (strain TN)).